Consider the following 297-residue polypeptide: tRNA pseudouridine synthase B (297 aa).

The active-site Nucleophile is Asp39.

The protein belongs to the pseudouridine synthase TruB family. Type 1 subfamily.

The catalysed reaction is uridine(55) in tRNA = pseudouridine(55) in tRNA. Functionally, responsible for synthesis of pseudouridine from uracil-55 in the psi GC loop of transfer RNAs. The chain is tRNA pseudouridine synthase B from Lactobacillus gasseri (strain ATCC 33323 / DSM 20243 / BCRC 14619 / CIP 102991 / JCM 1131 / KCTC 3163 / NCIMB 11718 / NCTC 13722 / AM63).